The following is a 107-amino-acid chain: UPF0122 protein MYPE4850 (107 aa).

This sequence belongs to the UPF0122 family.

In terms of biological role, might take part in the signal recognition particle (SRP) pathway. This is inferred from the conservation of its genetic proximity to ftsY/ffh. May be a regulatory protein. In Malacoplasma penetrans (strain HF-2) (Mycoplasma penetrans), this protein is UPF0122 protein MYPE4850.